Consider the following 1274-residue polypeptide: MPRVVLNGVTVDFPFQPYPCQQEYMTKVLECLQKKVNGILESPTGTGKTLCLLCTTLAWREHLRDAVSSLKIAERVQGELFASRTLSSWRSAADANGDSIDCYTDIPKIIYASRTHSQLTQVIGELRNTSYRPKVCVLGSREQLCIHPEVKKQESNHMQISLCRKKVASRSCHFYNNVEEKSLEQELATPILDIEDLVKNGSKHKVCPYYLSRNLKQQADIIFMPYNYLLDAKSRKAHNIDLKGTVVIFDEAHNVEKICEESASFDLTPRDVASGLEVINQVLEEQARVAQHGELQQEFIIDTSSSGLNMELEDIAKLKMILLHLEEAIDAVQLPGDDRGVTKPGSYIFELFAEAQITFQTKGCILESLDQIIQHLTGRTGVFTNTAGLQKLMDIIQIVFSVDPLEGSPGSQVGLGSSHFYKVHIHPETSHRRAAQRSDAWSTTASRKQGKVLSYWCFSPSHSMRELVQQGVRTLILTSGTLAPLSSFALEMQIPFPVCLENPHIIDKNQLWVGVIPRGPDGVQLSSAYDKRFSEECLSSLGKALGNIARVVPHGLLVFFPSYPVMEKSLEFWQAQGMSKKVEALKPLFVEPRNKGSFSEVIDAYYQQVASPGSNGATFLAVCRGKASEGLDFSDMNGRGVIVTGLPYPPRMDPRVILKMQFLDEMKGRSRVGGQCLSGQEWYQQQASRAVNQAIGRVIRHRHDYGAIFLCDHRFAYADARAHLPSWVRPYLKVYDNFGRVIRDVAQFFRVAQKAMPLPVPQAVTSSVSEGEAAVKEATLSSHSLSTRKAMSLDVHVPSLRRRPVGLPTAGDSESSVCVEYEQQTFSAQKRPMGLLAALEYNEQKAGASEEQALSSSTPSLRCEKRLSVEQRGGKKKVRLVNHPEEPVAGTQAGRAKMFMVAVKQALSQANFDTFTQALQHYKSSDDFEALVASLTCLFAEDPKKHTLLKGFYQFVRPHHKQQFEDICFQLTGQRCSYQPGNSLPFGEQAQSTASKQGRRELESKLTLSEGADRQLDPGEHLNQGWPHLSTHLTSKGDTSNCPKVGCVGEKPGQPAVNDYLSDVHKALGSASCNQLTAALRAYKQDDDLDKVLAVVAALTTAKPEHLSLLQRFGMFIRRHHKPRFVQTCADLMGLPTIGKGLELPCPRDESTTVPSELTHEDMKPGPSTSKKPEKTQSKISSFLRQRPDQSARSDDTIMQLPPRLPPEHTTSQWNFVCPACATEDTVLFQCPSCDFCRCRACWQRQLQASRLCPACGAVNRKQSIAQVIWPKPQ.

Residues 7-296 (NGVTVDFPFQ…ARVAQHGELQ (290 aa)) enclose the Helicase ATP-binding domain. Residue 42 to 49 (SPTGTGKT) participates in ATP binding. The [4Fe-4S] cluster site is built by C145, C163, C172, and C207. The short motif at 151–167 (KKQESNHMQISLCRKKV) is the Nuclear localization signal element. Residues 250–253 (DEAH) carry the DEAH box motif. The short motif at 871-877 (QRGGKKK) is the Nuclear localization signal element. Disordered stretches follow at residues 982-1002 (NSLPFGEQAQSTASKQGRREL), 1014-1038 (RQLDPGEHLNQGWPHLSTHLTSKGD), and 1143-1198 (ELPC…DDTI). A compositionally biased stretch (basic and acidic residues) spans 1186 to 1196 (QRPDQSARSDD).

This sequence belongs to the helicase family. RAD3/XPD subfamily. As to quaternary structure, interacts with TERF1. Interacts (via PIP-box) with PCNA; the interaction is direct and essential for suppressing telomere fragility. Interacts with MMS19; the interaction mediates the association of RTEL1 with the cytosolic iron-sulfur protein assembly (CIA) complex.

The protein resides in the nucleus. It catalyses the reaction ATP + H2O = ADP + phosphate + H(+). Its function is as follows. A probable ATP-dependent DNA helicase implicated in telomere-length regulation, DNA repair and the maintenance of genomic stability. Acts as an anti-recombinase to counteract toxic recombination and limit crossover during meiosis. Regulates meiotic recombination and crossover homeostasis by physically dissociating strand invasion events and thereby promotes noncrossover repair by meiotic synthesis dependent strand annealing (SDSA) as well as disassembly of D loop recombination intermediates. Also disassembles T loops and prevents telomere fragility by counteracting telomeric G4-DNA structures, which together ensure the dynamics and stability of the telomere. This Rattus norvegicus (Rat) protein is Regulator of telomere elongation helicase 1 (Rtel1).